Reading from the N-terminus, the 309-residue chain is Probable lipid kinase YegS-like (309 aa).

The DAGKc domain occupies 1–134 (MAPSHWRLIL…VDLLRIDAEH (134 aa)). ATP is bound by residues threonine 39, 65–71 (GDGTLSE), and threonine 96. The Mg(2+) site is built by valine 219, aspartate 222, and leucine 224. Glutamate 280 serves as the catalytic Proton acceptor.

It belongs to the diacylglycerol/lipid kinase family. YegS lipid kinase subfamily. It depends on Mg(2+) as a cofactor. Requires Ca(2+) as cofactor.

The protein localises to the cytoplasm. Probably phosphorylates lipids; the in vivo substrate is unknown. The sequence is that of Probable lipid kinase YegS-like from Xanthomonas oryzae pv. oryzae (strain MAFF 311018).